The primary structure comprises 119 residues: Iron-sulfur cluster insertion protein ErpA (119 aa).

Iron-sulfur cluster is bound by residues cysteine 47, cysteine 111, and cysteine 113.

It belongs to the HesB/IscA family. Homodimer. Requires iron-sulfur cluster as cofactor.

Its function is as follows. Required for insertion of 4Fe-4S clusters for at least IspG. This chain is Iron-sulfur cluster insertion protein ErpA, found in Blochmanniella floridana.